The following is a 1040-amino-acid chain: Activated CDC42 kinase 1 (1040 aa).

An SAM-like domain region spans residues 1-110 (MQPEEGTGWL…PSPTPGGLAG (110 aa)). Residues 86–109 (EAEFPSHHSQSTFRKPSPTPGGLA) form a disordered region. Thr113 is modified (phosphothreonine). The 260-residue stretch at 126–385 (LRLLEKLGDG…PTFVALRDFL (260 aa)) folds into the Protein kinase domain. Residues 132 to 140 (LGDGSFGVV) and Lys158 each bind ATP. Asp252 functions as the Proton acceptor in the catalytic mechanism. Position 284 is a phosphotyrosine; by SRC and autocatalysis (Tyr284). An SH3 domain is found at 388 to 448 (AQPTDMRALQ…PRNVVTSVAG (61 aa)). The disordered stretch occupies residues 505–527 (RPTQHLGRMKKPTYDPVSEDPDP). Position 518 is a phosphotyrosine (Tyr518). Positions 623-652 (DWDARPLPPPPAYDDVAQDEDDFEVCSINS) are required for interaction with SRC. The interval 632–635 (PPAY) is required for interaction with NEDD4. Residues 722 to 824 (TGQLTPSPTP…MPTTQSFASD (103 aa)) form a disordered region. Residues 733-876 (GDDKPQVPPR…PYLERYQRFL (144 aa)) are EBD domain. Composition is skewed to pro residues over residues 738–749 (QVPPRVPIPPRP) and 772–783 (PSSPPRVPPREP). Residues 802-812 (PLPHRLSSSPG) are compositionally biased toward low complexity. At Tyr827 the chain carries Phosphotyrosine. Arg839 bears the Omega-N-methylarginine mark. Phosphotyrosine occurs at positions 859 and 872. Residue Ser881 is modified to Phosphoserine. The tract at residues 881 to 957 (SPEEPAALPV…CPGDGQEAAR (77 aa)) is disordered. Pro residues predominate over residues 888 to 903 (LPVPPLLPPPSTPAPA). The span at 922 to 931 (NFSTNNSNPG) shows a compositional bias: polar residues. The region spanning 958–998 (PADKVQMLQAMVHGVTTEECQAALRSHSWSIQRAAQYLKVE) is the UBA domain.

Belongs to the protein kinase superfamily. Tyr protein kinase family. In terms of assembly, homodimer. Interacts with CDC42. Interacts with CSPG4 (activated). Interacts with MERTK (activated); stimulates autophosphorylation. May interact (phosphorylated) with HSP90AB1; maintains kinase activity. Interacts with NPHP1. Interacts with SNX9 (via SH3 domain). Interacts with SRC (via SH2 and SH3 domain). Interacts with EGFR, and this interaction is dependent on EGF stimulation and kinase activity of EGFR. Interacts (via kinase domain) with AKT1. Part of a collagen stimulated complex involved in cell migration composed of CDC42, CRK, TNK2 and BCAR1/p130cas. Interacts with BCAR1/p130cas via SH3 domains. Forms complexes with GRB2 and numerous receptor tyrosine kinases (RTK) including LTK, AXL or PDGFRL, in which GRB2 promotes RTK recruitment by TNK2. Interacts with NEDD4 (via WW3 domain). NEDD4L and EGF promote association with NEDD4. Mg(2+) serves as cofactor. In terms of processing, autophosphorylation regulates kinase activity. Phosphorylation on Tyr-518 is required for interaction with SRC and is observed during association with clathrin-coated pits. Post-translationally, polyubiquitinated by NEDD4 and NEDD4L. Degradation can be induced by EGF and is lysosome-dependent.

The protein localises to the cell membrane. It localises to the nucleus. It is found in the endosome. Its subcellular location is the cell junction. The protein resides in the adherens junction. The protein localises to the cytoplasmic vesicle membrane. It localises to the cytoplasmic vesicle. It is found in the clathrin-coated vesicle. Its subcellular location is the membrane. The protein resides in the clathrin-coated pit. The protein localises to the cytoplasm. It localises to the cytosol. The catalysed reaction is L-tyrosyl-[protein] + ATP = O-phospho-L-tyrosyl-[protein] + ADP + H(+). It carries out the reaction L-seryl-[protein] + ATP = O-phospho-L-seryl-[protein] + ADP + H(+). It catalyses the reaction L-threonyl-[protein] + ATP = O-phospho-L-threonyl-[protein] + ADP + H(+). Non-receptor tyrosine-protein and serine/threonine-protein kinase that is implicated in cell spreading and migration, cell survival, cell growth and proliferation. Transduces extracellular signals to cytosolic and nuclear effectors. Phosphorylates AKT1, AR, MCF2, WASL and WWOX. Implicated in trafficking and clathrin-mediated endocytosis through binding to epidermal growth factor receptor (EGFR) and clathrin. Binds to both poly- and mono-ubiquitin and regulates ligand-induced degradation of EGFR, thereby contributing to the accumulation of EGFR at the limiting membrane of early endosomes. Downstream effector of CDC42 which mediates CDC42-dependent cell migration via phosphorylation of BCAR1. May be involved both in adult synaptic function and plasticity and in brain development. Activates AKT1 by phosphorylating it on 'Tyr-176'. Phosphorylates AR on 'Tyr-267' and 'Tyr-363', thereby promoting its recruitment to androgen-responsive enhancers (AREs). Phosphorylates WWOX on 'Tyr-287'. Phosphorylates MCF2, thereby enhancing its activity as a guanine nucleotide exchange factor (GEF) toward Rho family proteins. Contributes to the control of AXL receptor levels. Confers metastatic properties on cancer cells and promotes tumor growth by negatively regulating tumor suppressor such as WWOX and positively regulating pro-survival factors such as AKT1 and AR. This chain is Activated CDC42 kinase 1, found in Rattus norvegicus (Rat).